We begin with the raw amino-acid sequence, 98 residues long: DNA-binding protein Fis (98 aa).

The segment at residues 74-93 (QTRAATMLGINRGTLRKKLK) is a DNA-binding region (H-T-H motif).

This sequence belongs to the transcriptional regulatory Fis family. Homodimer.

Its function is as follows. Activates ribosomal RNA transcription. Plays a direct role in upstream activation of rRNA promoters. This is DNA-binding protein Fis from Haemophilus ducreyi (strain 35000HP / ATCC 700724).